We begin with the raw amino-acid sequence, 145 residues long: Small ribosomal subunit protein uS15 (145 aa).

It belongs to the universal ribosomal protein uS15 family. Part of the 30S ribosomal subunit.

This chain is Small ribosomal subunit protein uS15, found in Thermoplasma acidophilum (strain ATCC 25905 / DSM 1728 / JCM 9062 / NBRC 15155 / AMRC-C165).